The chain runs to 224 residues: Probable GTP-binding protein EngB (224 aa).

The 175-residue stretch at 31-205 folds into the EngB-type G domain; the sequence is IGVEIAFAGR…LSILNDWCHP (175 aa). GTP is bound by residues 39-46, 66-70, 84-87, 151-154, and 184-186; these read GRSNAGKS, GRTQL, DLPG, TKSD, and LSS. Mg(2+) contacts are provided by Ser-46 and Thr-68.

Belongs to the TRAFAC class TrmE-Era-EngA-EngB-Septin-like GTPase superfamily. EngB GTPase family. Requires Mg(2+) as cofactor.

In terms of biological role, necessary for normal cell division and for the maintenance of normal septation. The sequence is that of Probable GTP-binding protein EngB from Shewanella frigidimarina (strain NCIMB 400).